The following is a 312-amino-acid chain: D-alanine--D-alanine ligase (312 aa).

Positions 108–308 (KLVWQQTGIP…YSELVVKVLS (201 aa)) constitute an ATP-grasp domain. 138-193 (VAKLGVPLFVKPASEGSSVAVEKVKSADALPAALEEAAKHDKIVIVEKSIEGGGEY) contacts ATP. Residues Asp-262, Glu-275, and Asn-277 each contribute to the Mg(2+) site.

This sequence belongs to the D-alanine--D-alanine ligase family. It depends on Mg(2+) as a cofactor. The cofactor is Mn(2+).

The protein localises to the cytoplasm. The enzyme catalyses 2 D-alanine + ATP = D-alanyl-D-alanine + ADP + phosphate + H(+). It participates in cell wall biogenesis; peptidoglycan biosynthesis. Functionally, cell wall formation. The sequence is that of D-alanine--D-alanine ligase from Burkholderia mallei (strain NCTC 10247).